The sequence spans 317 residues: E3 ubiquitin-protein ligase NRDP1 (317 aa).

The RING-type; degenerate zinc finger occupies 18-57 (CPICSGVLEEPVQAPHCEHAFCNACITQWFSQQQTCPVDR). The SIAH-type; degenerate zinc-finger motif lies at 78-138 (KLQIACDNAV…LPNHNCIKHL (61 aa)).

As to quaternary structure, interacts with USP8, ERBB3, PRKN and BIRC6. Interacts with CSF2RB, EPOR, IL3RA, MYD88 and TBK1. Interacts with CLEC16A. Autoubiquitinated. Autoubiquitination leads to proteasomal degradation. Deubiquitinated by USP8 to get stabilized which induces apoptosis. As to expression, detected in ovary, testis and prostate.

The enzyme catalyses S-ubiquitinyl-[E2 ubiquitin-conjugating enzyme]-L-cysteine + [acceptor protein]-L-lysine = [E2 ubiquitin-conjugating enzyme]-L-cysteine + N(6)-ubiquitinyl-[acceptor protein]-L-lysine.. It participates in protein modification; protein ubiquitination. Its function is as follows. Acts as E3 ubiquitin-protein ligase and regulates the degradation of target proteins. Polyubiquitinates MYD88. Negatively regulates MYD88-dependent production of pro-inflammatory cytokines. Can promote TRIF-dependent production of type I interferon and inhibits infection with vesicular stomatitis virus. Promotes also activation of TBK1 and IRF3. Involved in the ubiquitination of erythropoietin (EPO) and interleukin-3 (IL-3) receptors. Thus, through maintaining basal levels of cytokine receptors, RNF41 is involved in the control of hematopoietic progenitor cell differentiation into myeloerythroid lineages. Contributes to the maintenance of steady-state ERBB3 levels by mediating its growth factor-independent degradation. Involved in the degradation of the inhibitor of apoptosis BIRC6 and thus is an important regulator of cell death by promoting apoptosis. Also acts as a PRKN modifier that accelerates its degradation, resulting in a reduction of PRKN activity, influencing the balance of intracellular redox state. The RNF41-PRKN pathway regulates autophagosome-lysosome fusion during late mitophagy. Mitophagy is a selective form of autophagy necessary for mitochondrial quality control. The chain is E3 ubiquitin-protein ligase NRDP1 (RNF41) from Homo sapiens (Human).